Reading from the N-terminus, the 1740-residue chain is Vitamin B12-dependent ribonucleoside-diphosphate reductase (1740 aa).

The ATP-cone domain maps to 4–96; that stretch reads EKVMKRDGRI…LYRKKKAEIR (93 aa). Residues Thr257, 272–273, and Gly301 contribute to the substrate site; that span reads AC. A disulfide bridge links Cys273 with Cys1308. The 140-residue stretch at 443–582 folds into the DOD-type homing endonuclease 1 domain; it reads LAGFIAGDGC…VTHYLNALGI (140 aa). Residue Asn913 is the Proton acceptor of the active site. A substrate-binding site is contributed by 913-914; that stretch reads NP. The DOD-type homing endonuclease 2 domain maps to 1063–1194; the sequence is VLGWFIGDGY…VQDLLLLFGI (132 aa). Residue Cys1297 is the Cysteine radical intermediate of the active site. Substrate is bound by residues 1297 to 1299 and 1471 to 1475; these read CGE and PTGSV. Residue Glu1299 is the Proton acceptor of the active site.

It belongs to the ribonucleoside diphosphate reductase class-2 family. Adenosylcob(III)alamin serves as cofactor. In terms of processing, this protein undergoes a protein self splicing that involves a post-translational excision of the intervening region (intein) followed by peptide ligation.

The enzyme catalyses a 2'-deoxyribonucleoside 5'-diphosphate + [thioredoxin]-disulfide + H2O = a ribonucleoside 5'-diphosphate + [thioredoxin]-dithiol. In terms of biological role, provides the precursors necessary for DNA synthesis. Catalyzes the biosynthesis of deoxyribonucleotides from the corresponding ribonucleotides. This is Vitamin B12-dependent ribonucleoside-diphosphate reductase (rnr) from Pyrococcus furiosus (strain ATCC 43587 / DSM 3638 / JCM 8422 / Vc1).